The primary structure comprises 401 residues: MEPGRRGAAALLALLCVACALRAGRAQYERYSFRSFPRDELMPLESAYRHALDKYSGEHWAESVGYLEISLRLHRLLRDSEAFCHRNCSAAPQPEPAAGLASYPELRLFGGLLRRAHCLKRCKQGLPAFRQSQPSREVLADFQRREPYKFLQFAYFKANNLPKAIAAAHTFLLKHPDDEMMKRNMAYYKSLPGAEDYIKDLETKSYESLFIRAVRAYNGENWRTSITDMELALPDFFKAFYECLAACEGSREIKDFKDFYLSIADHYVEVLECKIQCEENLTPVIGGYPVEKFVATMYHYLQFAYYKLNDLKNAAPCAVSYLLFDQNDKVMQQNLVYYQYHRDTWGLSDEHFQPRPEAVQFFNVTTLQKELYDFAKENIMDDDEGEVVEYVDDLLELEETS.

Residues 1–26 (MEPGRRGAAALLALLCVACALRAGRA) form the signal peptide. Residues asparagine 87 and asparagine 363 are each glycosylated (N-linked (GlcNAc...) asparagine).

Belongs to the leprecan family. Found in articular chondrocytes. Expressed in a variety of tissues.

The protein localises to the secreted. It is found in the extracellular space. Its subcellular location is the extracellular matrix. Its function is as follows. Necessary for efficient 3-hydroxylation of fibrillar collagen prolyl residues. This chain is Cartilage-associated protein (CRTAP), found in Homo sapiens (Human).